The chain runs to 94 residues: Co-chaperonin GroES (94 aa).

Belongs to the GroES chaperonin family. In terms of assembly, heptamer of 7 subunits arranged in a ring. Interacts with the chaperonin GroEL.

The protein resides in the cytoplasm. Together with the chaperonin GroEL, plays an essential role in assisting protein folding. The GroEL-GroES system forms a nano-cage that allows encapsulation of the non-native substrate proteins and provides a physical environment optimized to promote and accelerate protein folding. GroES binds to the apical surface of the GroEL ring, thereby capping the opening of the GroEL channel. This chain is Co-chaperonin GroES, found in Thermoanaerobacter pseudethanolicus (strain ATCC 33223 / 39E) (Clostridium thermohydrosulfuricum).